The following is a 266-amino-acid chain: tRNA pseudouridine synthase A (266 aa).

Residue D51 is the Nucleophile of the active site. Y106 lines the substrate pocket.

It belongs to the tRNA pseudouridine synthase TruA family.

It catalyses the reaction uridine(38/39/40) in tRNA = pseudouridine(38/39/40) in tRNA. Formation of pseudouridine at positions 38, 39 and 40 in the anticodon stem and loop of transfer RNAs. The chain is tRNA pseudouridine synthase A from Pyrococcus furiosus (strain ATCC 43587 / DSM 3638 / JCM 8422 / Vc1).